A 431-amino-acid polypeptide reads, in one-letter code: Serine/threonine-protein kinase Sgk1 (431 aa).

A disordered region spans residues 58-93 (LNLTPPQDPELMNSNPSPPPSPSQQINLGPSSNPSA). The segment covering 81-93 (QQINLGPSSNPSA) has biased composition (polar residues). A Protein kinase domain is found at 98-355 (FHFLKVIGKG…FTEIKNHVFF (258 aa)). Residues 104–112 (IGKGSFGKV) and Lys127 each bind ATP. The active-site Proton acceptor is Asp222. One can recognise an AGC-kinase C-terminal domain in the interval 356–431 (SPINWDDLNA…SYAPSMDSYL (76 aa)).

Belongs to the protein kinase superfamily. AGC Ser/Thr protein kinase family.

The protein localises to the cytoplasm. It is found in the nucleus. It localises to the endoplasmic reticulum. It carries out the reaction L-seryl-[protein] + ATP = O-phospho-L-seryl-[protein] + ADP + H(+). The catalysed reaction is L-threonyl-[protein] + ATP = O-phospho-L-threonyl-[protein] + ADP + H(+). Its function is as follows. Protein kinase that may play an important role in cellular stress response. May be involved in the regulation of processes such as cell survival, neuronal excitability and renal sodium excretion. The chain is Serine/threonine-protein kinase Sgk1 (sgk1) from Fundulus heteroclitus (Killifish).